Consider the following 186-residue polypeptide: MKIIAFVGMPASGKSEAARIAAEMGIPVINMGDVIRKEVSRRGLEPNDSNTGMVATQLRKCEGMDAVAVRCISQIRDAGSDLIVVDGVRGVAEVECFRRELGEGFILISIYAPIEIRFSRVQKRGRSDDMNSIEGLRNRDERELSWGMGEAIEASNIEIENNSTLEIFKKDVVEVLSNYLRQTPSE.

An ATP-binding site is contributed by G8 to S15.

It belongs to the UPF0200 family.

In Methanosarcina barkeri (strain Fusaro / DSM 804), this protein is UPF0200 protein Mbar_A0975.